The primary structure comprises 367 residues: Probable butyrate kinase (367 aa).

This sequence belongs to the acetokinase family.

The protein resides in the cytoplasm. The catalysed reaction is butanoate + ATP = butanoyl phosphate + ADP. The polypeptide is Probable butyrate kinase (Bacillus cytotoxicus (strain DSM 22905 / CIP 110041 / 391-98 / NVH 391-98)).